A 219-amino-acid chain; its full sequence is MTQDELKKAVGWAALKYVRPGTIVGVGTGSTASHFIDALATMKGQIEGAVSSSDASTARLKSLGIPVFDLNEVDSLDIYVDGADEINGAMQMIKGGGAALTREKIVAAVAKKFVCIVDASKQVDILGSFPLPVEVIPMARAYVARELVKLGGQPVYRQGVLTDNGNVILDVHNLQIMEPCKLENAINAIAGVVTVGLFANRGADVALVGCADGVKTLTL.

Substrate-binding positions include 28–31 (TGST), 81–84 (DGAD), and 94–97 (KGGG). Glu103 acts as the Proton acceptor in catalysis. Lys121 contributes to the substrate binding site.

The protein belongs to the ribose 5-phosphate isomerase family. Homodimer.

The enzyme catalyses aldehydo-D-ribose 5-phosphate = D-ribulose 5-phosphate. Its pathway is carbohydrate degradation; pentose phosphate pathway; D-ribose 5-phosphate from D-ribulose 5-phosphate (non-oxidative stage): step 1/1. Functionally, catalyzes the reversible conversion of ribose-5-phosphate to ribulose 5-phosphate. This chain is Ribose-5-phosphate isomerase A, found in Edwardsiella ictaluri (strain 93-146).